Consider the following 505-residue polypeptide: Histidine--tRNA ligase (505 aa).

The protein belongs to the class-II aminoacyl-tRNA synthetase family. In terms of assembly, homodimer.

It is found in the cytoplasm. The catalysed reaction is tRNA(His) + L-histidine + ATP = L-histidyl-tRNA(His) + AMP + diphosphate + H(+). In Jannaschia sp. (strain CCS1), this protein is Histidine--tRNA ligase.